Here is a 149-residue protein sequence, read N- to C-terminus: MHCPFCSATDTKVIDSRLVADGHQVRRRRECVQCHERYTTFEGAELVMPRVVKQDGSRQPFDEEKLRGGMLRAVEKRPVSMDQIEQSLTKIKSTLRATGEREVKSEMIGNLMMDQLVNLDKVAYIRFASVYRAFEDVSEFGEAIANLQK.

A zinc finger lies at 3-34 (CPFCSATDTKVIDSRLVADGHQVRRRRECVQC). In terms of domain architecture, ATP-cone spans 49 to 139 (PRVVKQDGSR…VYRAFEDVSE (91 aa)).

This sequence belongs to the NrdR family. It depends on Zn(2+) as a cofactor.

Negatively regulates transcription of bacterial ribonucleotide reductase nrd genes and operons by binding to NrdR-boxes. This Shewanella piezotolerans (strain WP3 / JCM 13877) protein is Transcriptional repressor NrdR.